Consider the following 97-residue polypeptide: uncharacterized protein (97 aa).

Disordered regions lie at residues Met-1 to Asp-20 and Val-52 to Ala-97.

This is an uncharacterized protein from Paracoccus pantotrophus (Thiosphaera pantotropha).